The sequence spans 519 residues: MQFSSVFPLEGKACVSPIRRGGEGSASDRLKIGDSSSIKHDRAVRRMCLGYRGTKNGAQCVLTSDAGPDTLHVRTSFRRNFADPNEVAAVILGGGTGTQLFPLTSTRATPAVPIGGCYRLIDIPMSNCFNSGINKIFIMTQFNSASLNRHIHRTYLGGGINFTDGSVEVLAATQMPGEAAGWFQGTADAVRKFIWVLEDYYKHKAIEHILILSGDQLYRMDYMELVQKHVDDNADITLSCAPVGESRASDYGLVKFDSSGRVIQFSEKPKGTDLEAMKVDTSFLNFAIDDPTKFPYIASMGVYVFKRDVLLNLLKSRYAELHDFGSEILPRALHEHNVQAYVFADYWEDIGTIRSFFDANMALCEQPPKFEFYDPKTPFFTSPRYLPPTKSDKCRIKDAIISHGCFLRECTIEHSIVGVRSRLNSACELKNTMMMGADLYETEDEISRLLSEGKVPIGVGENTKINNCIIDMNARVGRNVVITNSEGVQESDRPEEGYYIRSGIVVILKNATIKDGKVI.

The N-terminal 74 residues, 1–74 (MQFSSVFPLE…DAGPDTLHVR (74 aa)), are a transit peptide targeting the chloroplast.

The protein belongs to the bacterial/plant glucose-1-phosphate adenylyltransferase family. Heterotetramer composed of two small and two large subunits. Expressed in stems.

It localises to the plastid. The protein localises to the chloroplast. The enzyme catalyses alpha-D-glucose 1-phosphate + ATP + H(+) = ADP-alpha-D-glucose + diphosphate. It functions in the pathway glycan biosynthesis; starch biosynthesis. Activated by 3'phosphoglycerate, inhibited by orthophosphate. Allosteric regulation. Its function is as follows. Involved in synthesis of starch. Catalyzes the synthesis of ADP-glucose, a molecule that serves as an activated glycosyl donor for alpha-1,4-glucan synthesis. Essential for starch synthesis in leaf chloroplasts. The polypeptide is Glucose-1-phosphate adenylyltransferase large subunit 3, chloroplastic/amyloplastic (Oryza sativa subsp. japonica (Rice)).